The primary structure comprises 195 residues: Nicotinamide riboside kinase 1 (195 aa).

Residue 10–18 coordinates ATP; sequence GVTNGGKTT. Threonine 17 and aspartate 36 together coordinate Mg(2+). Catalysis depends on aspartate 36, which acts as the Proton acceptor. Substrate is bound by residues 36-39 and 55-56; these read DDFF and YD. Arginine 128 provides a ligand contact to ATP. Residues arginine 129 and 134-135 each bind substrate; that span reads YE. Residues 132-134 and 172-174 contribute to the ATP site; these read RVY and RSE.

It belongs to the uridine kinase family. NRK subfamily. Monomer.

The catalysed reaction is beta-nicotinamide D-riboside + ATP = beta-nicotinamide D-ribonucleotide + ADP + H(+). The enzyme catalyses beta-D-ribosylnicotinate + ATP = nicotinate beta-D-ribonucleotide + ADP + H(+). It functions in the pathway cofactor biosynthesis; NAD(+) biosynthesis. Its function is as follows. Catalyzes the phosphorylation of nicotinamide riboside (NR) and nicotinic acid riboside (NaR) to form nicotinamide mononucleotide (NMN) and nicotinic acid mononucleotide (NaMN). The sequence is that of Nicotinamide riboside kinase 1 (Nmrk1) from Rattus norvegicus (Rat).